The primary structure comprises 588 residues: Phosphatidylinositol-3,5-bisphosphate 3-phosphatase mtm-1 (588 aa).

The region spanning 20–91 (IQESIDLKLL…GQVSRIEKVG (72 aa)) is the GRAM domain. Residues 164-543 (GWKIYSAEKE…CGLHVWIDYY (380 aa)) enclose the Myotubularin phosphatase domain. A 1,2-diacyl-sn-glycero-3-phospho-(1D-myo-inositol-3,5-bisphosphate) contacts are provided by Asn-293, Asn-316, and Ile-317. 3 residues coordinate a 1,2-diacyl-sn-glycero-3-phospho-(1D-myo-inositol-3-phosphate): Asn-293, Asn-316, and Ile-317. Cys-378 functions as the Phosphocysteine intermediate in the catalytic mechanism. Residues Ser-379, Asp-380, Gly-381, Trp-382, Asp-383, Arg-384, Lys-420, and Arg-424 each contribute to the a 1,2-diacyl-sn-glycero-3-phospho-(1D-myo-inositol-3,5-bisphosphate) site. Residues Ser-379, Asp-380, Gly-381, Trp-382, Asp-383, and Arg-384 each coordinate a 1,2-diacyl-sn-glycero-3-phospho-(1D-myo-inositol-3-phosphate). Residue Ser-379 coordinates phosphate. Gly-381, Trp-382, Asp-383, and Arg-384 together coordinate phosphate. Arg-424 contributes to the a 1,2-diacyl-sn-glycero-3-phospho-(1D-myo-inositol-3-phosphate) binding site. Residues 563 to 588 (AQFVDEKKQLLDEIMALDDAAQKLTA) adopt a coiled-coil conformation.

It belongs to the protein-tyrosine phosphatase family. Non-receptor class myotubularin subfamily. Expressed in embryo, larva and in adults. Expressed in a few head and tail neurons. Expressed in hypodermis, body wall and pharyngeal muscles, sheath cells, vulva, distal tip cells and coelomocytes.

Its subcellular location is the cell membrane. The protein localises to the cell projection. It is found in the phagocytic cup. The protein resides in the apical cell membrane. It localises to the cytoplasmic granule membrane. It catalyses the reaction a 1,2-diacyl-sn-glycero-3-phospho-(1D-myo-inositol-3,5-bisphosphate) + H2O = a 1,2-diacyl-sn-glycero-3-phospho-(1D-myo-inositol-5-phosphate) + phosphate. It carries out the reaction a 1,2-diacyl-sn-glycero-3-phospho-(1D-myo-inositol-3-phosphate) + H2O = a 1,2-diacyl-sn-glycero-3-phospho-(1D-myo-inositol) + phosphate. The enzyme catalyses 1,2-dioctanoyl-sn-glycero-3-phospho-(1-D-myo-inositol-3-phosphate) + H2O = 1,2-dioctanoyl-sn-glycero-3-phospho-(1D-myo-inositol) + phosphate. In terms of biological role, lipid phosphatase that specifically dephosphorylates phosphatidylinositol 3-phosphate (PI3P) and phosphatidylinositol 3,5-bisphosphate (PI(3,5)P2). Negatively regulates accumulation of PI3P on intracellular vesicles. Negatively regulates phagocytosis of apoptotic cells probably by limiting the recruitment and/or the activation of ced-5, ced-2 and ced-12 complex. In addition, may positively regulate phagosome maturation by promoting recycling of apoptotic receptor ced-1 back to the plasma membrane. Essential for embryonic and larval development. May promote migration of distal tip cells. The chain is Phosphatidylinositol-3,5-bisphosphate 3-phosphatase mtm-1 from Caenorhabditis elegans.